An 82-amino-acid polypeptide reads, in one-letter code: ATP synthase subunit c, chloroplastic (82 aa).

Transmembrane regions (helical) follow at residues Ile-4–Pro-24 and Leu-57–Ala-77.

Belongs to the ATPase C chain family. F-type ATPases have 2 components, F(1) - the catalytic core - and F(0) - the membrane proton channel. F(1) has five subunits: alpha(3), beta(3), gamma(1), delta(1), epsilon(1). F(0) has four main subunits: a(1), b(1), b'(1) and c(10-14). The alpha and beta chains form an alternating ring which encloses part of the gamma chain. F(1) is attached to F(0) by a central stalk formed by the gamma and epsilon chains, while a peripheral stalk is formed by the delta, b and b' chains.

The protein resides in the plastid. It is found in the chloroplast thylakoid membrane. In terms of biological role, f(1)F(0) ATP synthase produces ATP from ADP in the presence of a proton or sodium gradient. F-type ATPases consist of two structural domains, F(1) containing the extramembraneous catalytic core and F(0) containing the membrane proton channel, linked together by a central stalk and a peripheral stalk. During catalysis, ATP synthesis in the catalytic domain of F(1) is coupled via a rotary mechanism of the central stalk subunits to proton translocation. Its function is as follows. Key component of the F(0) channel; it plays a direct role in translocation across the membrane. A homomeric c-ring of between 10-14 subunits forms the central stalk rotor element with the F(1) delta and epsilon subunits. This chain is ATP synthase subunit c, chloroplastic, found in Thalassiosira pseudonana (Marine diatom).